The primary structure comprises 328 residues: Biotin synthase (328 aa).

One can recognise a Radical SAM core domain in the interval 51-282 (FNGNHVDLCS…DKIIRYAGGR (232 aa)). Residues cysteine 69, cysteine 73, and cysteine 76 each contribute to the [4Fe-4S] cluster site. Residues cysteine 112, cysteine 147, cysteine 207, and arginine 277 each contribute to the [2Fe-2S] cluster site.

This sequence belongs to the radical SAM superfamily. Biotin synthase family. As to quaternary structure, homodimer. [4Fe-4S] cluster serves as cofactor. It depends on [2Fe-2S] cluster as a cofactor.

It carries out the reaction (4R,5S)-dethiobiotin + (sulfur carrier)-SH + 2 reduced [2Fe-2S]-[ferredoxin] + 2 S-adenosyl-L-methionine = (sulfur carrier)-H + biotin + 2 5'-deoxyadenosine + 2 L-methionine + 2 oxidized [2Fe-2S]-[ferredoxin]. It participates in cofactor biosynthesis; biotin biosynthesis; biotin from 7,8-diaminononanoate: step 2/2. Functionally, catalyzes the conversion of dethiobiotin (DTB) to biotin by the insertion of a sulfur atom into dethiobiotin via a radical-based mechanism. This is Biotin synthase from Clostridium acetobutylicum (strain ATCC 824 / DSM 792 / JCM 1419 / IAM 19013 / LMG 5710 / NBRC 13948 / NRRL B-527 / VKM B-1787 / 2291 / W).